The primary structure comprises 488 residues: UDP-glycosyltransferase 85A3 (488 aa).

Residues Ser-306, 363 to 365, 380 to 388, and 402 to 405 contribute to the UDP-alpha-D-glucose site; these read CPQ, HCGWNSTLE, and FAEQ.

It belongs to the UDP-glycosyltransferase family. Expressed in roots and flowers.

This chain is UDP-glycosyltransferase 85A3 (UGT85A3), found in Arabidopsis thaliana (Mouse-ear cress).